Consider the following 382-residue polypeptide: Osmoprotectant import ATP-binding protein OsmV (382 aa).

The region spanning 2–241 (IKLENLTKQF…PANEFVGSFV (240 aa)) is the ABC transporter domain. 39 to 46 (GPSGCGKT) contributes to the ATP binding site. CBS domains are found at residues 258–320 (VTDQ…THPF) and 322–373 (ITGK…GRTR).

This sequence belongs to the ABC transporter superfamily. The complex is composed of two ATP-binding proteins (OsmV), two transmembrane proteins (OsmW and OsmY) and a solute-binding protein (OsmX).

Its subcellular location is the cell inner membrane. In terms of biological role, part of the OsmU ABC transporter complex, which is involved in the uptake of osmoprotectants such as choline-O-sulfate and glycine betaine. Probably responsible for energy coupling to the transport system. This Salmonella typhimurium (strain LT2 / SGSC1412 / ATCC 700720) protein is Osmoprotectant import ATP-binding protein OsmV (osmV).